The primary structure comprises 754 residues: 5-methyltetrahydropteroyltriglutamate--homocysteine methyltransferase (754 aa).

5-methyltetrahydropteroyltri-L-glutamate contacts are provided by residues 15 to 18 (RELK) and Lys114. L-homocysteine-binding positions include 430-432 (IGS) and Glu483. L-methionine contacts are provided by residues 430–432 (IGS) and Glu483. 5-methyltetrahydropteroyltri-L-glutamate contacts are provided by residues 514 to 515 (RC) and Trp560. Asp598 is an L-homocysteine binding site. Asp598 serves as a coordination point for L-methionine. Residue Glu604 coordinates 5-methyltetrahydropteroyltri-L-glutamate. His641, Cys643, and Glu665 together coordinate Zn(2+). Catalysis depends on His694, which acts as the Proton donor. Position 726 (Cys726) interacts with Zn(2+).

It belongs to the vitamin-B12 independent methionine synthase family. Zn(2+) is required as a cofactor.

The enzyme catalyses 5-methyltetrahydropteroyltri-L-glutamate + L-homocysteine = tetrahydropteroyltri-L-glutamate + L-methionine. The protein operates within amino-acid biosynthesis; L-methionine biosynthesis via de novo pathway; L-methionine from L-homocysteine (MetE route): step 1/1. Its function is as follows. Catalyzes the transfer of a methyl group from 5-methyltetrahydrofolate to homocysteine resulting in methionine formation. This chain is 5-methyltetrahydropteroyltriglutamate--homocysteine methyltransferase, found in Campylobacter jejuni subsp. jejuni serotype O:2 (strain ATCC 700819 / NCTC 11168).